A 485-amino-acid polypeptide reads, in one-letter code: Cysteine--tRNA ligase (485 aa).

A Zn(2+)-binding site is contributed by Cys29. Positions 31–41 (ATVQGMPHVGH) match the 'HIGH' region motif. The interval 174-198 (QRVEDMQDAPDADPRGKRDPHDFAL) is disordered. Over residues 185–197 (ADPRGKRDPHDFA) the composition is skewed to basic and acidic residues. Zn(2+)-binding residues include Cys227, His252, and Glu256. The 'KMSKS' region signature appears at 283–287 (KMSKS). Lys286 contributes to the ATP binding site.

It belongs to the class-I aminoacyl-tRNA synthetase family. As to quaternary structure, monomer. Zn(2+) serves as cofactor.

Its subcellular location is the cytoplasm. The enzyme catalyses tRNA(Cys) + L-cysteine + ATP = L-cysteinyl-tRNA(Cys) + AMP + diphosphate. This Micrococcus luteus (strain ATCC 4698 / DSM 20030 / JCM 1464 / CCM 169 / CCUG 5858 / IAM 1056 / NBRC 3333 / NCIMB 9278 / NCTC 2665 / VKM Ac-2230) (Micrococcus lysodeikticus) protein is Cysteine--tRNA ligase.